A 122-amino-acid polypeptide reads, in one-letter code: Large ribosomal subunit protein uL14 (122 aa).

It belongs to the universal ribosomal protein uL14 family. Part of the 50S ribosomal subunit. Forms a cluster with proteins L3 and L19. In the 70S ribosome, L14 and L19 interact and together make contacts with the 16S rRNA in bridges B5 and B8.

Its function is as follows. Binds to 23S rRNA. Forms part of two intersubunit bridges in the 70S ribosome. This Erythrobacter litoralis (strain HTCC2594) protein is Large ribosomal subunit protein uL14.